A 366-amino-acid chain; its full sequence is Chorismate synthase (366 aa).

NADP(+) is bound by residues Arg48 and Arg54. Residues 125–127, 238–239, Gly278, 293–297, and Arg319 contribute to the FMN site; these read RSS, NA, and KPTSS.

Belongs to the chorismate synthase family. In terms of assembly, homotetramer. It depends on FMNH2 as a cofactor.

It catalyses the reaction 5-O-(1-carboxyvinyl)-3-phosphoshikimate = chorismate + phosphate. It participates in metabolic intermediate biosynthesis; chorismate biosynthesis; chorismate from D-erythrose 4-phosphate and phosphoenolpyruvate: step 7/7. Catalyzes the anti-1,4-elimination of the C-3 phosphate and the C-6 proR hydrogen from 5-enolpyruvylshikimate-3-phosphate (EPSP) to yield chorismate, which is the branch point compound that serves as the starting substrate for the three terminal pathways of aromatic amino acid biosynthesis. This reaction introduces a second double bond into the aromatic ring system. This chain is Chorismate synthase, found in Ralstonia nicotianae (strain ATCC BAA-1114 / GMI1000) (Ralstonia solanacearum).